Reading from the N-terminus, the 1087-residue chain is A-kinase anchor protein 9 (1087 aa).

The stretch at 5–461 forms a coiled coil; sequence EVQCQAEKVR…REREKMERIQ (457 aa). A PKA-RII subunit binding domain region spans residues 559–572; that stretch reads SLQKVLEEKVAAAL. The stretch at 614 to 773 forms a coiled coil; that stretch reads MESDVSALTW…SEKEDKTEVQ (160 aa). Positions 667–685 are enriched in basic and acidic residues; that stretch reads VQDSETKQRERERQSRLHG. The segment at 667 to 691 is disordered; sequence VQDSETKQRERERQSRLHGDLGVLE.

In terms of assembly, interacts with the regulatory region of protein kinase N (PKN), protein phosphatase 2A (PP2A), protein phosphatase 1 (PP1) and the immature non-phosphorylated form of PKC epsilon. Interacts with CIP4 and FNBP1. Interacts with chloride intracellular channel proteins CLIC1, CLIC4 and CLIC5. CSNK1D binding promotes its centrosomal subcellular location. Interacts with GM130/GOLGA2; leading to recruitment to the Golgi apparatus. Interacts with KCNQ1; targets protein kinase A (PKA) catalytic and regulatory subunits and protein phosphatase 1 (PP1), to the heterodimer KCNQ1-KCNE1. Interacts with PDE4DIP; this interaction stabilizes both proteins. In complex with PDE4DIP, recruits CAMSAP2 to the Golgi apparatus. Forms a pericentrosomal complex with CDK5RAP2, EB1/MAPRE1 and PDE4DIP; within this complex, MAPRE1 binding to CDK5RAP2 may be mediated by PDE4DIP. The interaction with PDE4DIP is isoform-specific. Interacts with MAPRE1 and MAPRE3. Interacts (via C-terminus) with CAMSAP2; this interaction is much stronger in the presence of PDE4DIP. Interacts with CAMSAP3. Interacts (via C-terminus) with the gamma-tubulin ring complex (gamma-TuRC), composed of gamma-tubulin, TUBGCP2, TUBGCP3, TUBGCP4, TUBGCP5 and TUBGCP6. As to expression, highly expressed in gastric parietal cells.

Its subcellular location is the golgi apparatus. It is found in the cytoplasm. It localises to the cytoskeleton. The protein localises to the microtubule organizing center. The protein resides in the centrosome. In terms of biological role, scaffolding protein that assembles several protein kinases and phosphatases on the centrosome and Golgi apparatus. Required to maintain the integrity of the Golgi apparatus. Required for microtubule nucleation at the cis-side of the Golgi apparatus. Required for association of the centrosomes with the poles of the bipolar mitotic spindle during metaphase. In complex with PDE4DIP, recruits CAMSAP2 to the Golgi apparatus and tethers non-centrosomal minus-end microtubules to the Golgi, an important step for polarized cell movement. In complex with PDE4DIP, EB1/MAPRE1 and CDK5RAP2, contributes to microtubules nucleation and extension also from the centrosome to the cell periphery. The interaction with PDE4DIP is isoform-specific. This chain is A-kinase anchor protein 9 (AKAP9), found in Oryctolagus cuniculus (Rabbit).